The chain runs to 198 residues: Putative NADH dehydrogenase/NAD(P)H nitroreductase XOO4267 (198 aa).

This sequence belongs to the nitroreductase family. HadB/RutE subfamily. Requires FMN as cofactor.

The sequence is that of Putative NADH dehydrogenase/NAD(P)H nitroreductase XOO4267 from Xanthomonas oryzae pv. oryzae (strain KACC10331 / KXO85).